The sequence spans 393 residues: 2-methylcitrate synthase (393 aa).

Substrate is bound by residues Arg-92 and His-207. His-242 is a catalytic residue. Residue Lys-275 to Phe-279 coordinates CoA. The active site involves His-281. Arg-290 is a binding site for substrate. Residue Asp-332 is part of the active site. The substrate site is built by Arg-357 and Arg-376.

It belongs to the citrate synthase family. As to quaternary structure, homodimer.

It carries out the reaction propanoyl-CoA + oxaloacetate + H2O = (2S,3S)-2-methylcitrate + CoA + H(+). The catalysed reaction is oxaloacetate + acetyl-CoA + H2O = citrate + CoA + H(+). The protein operates within organic acid metabolism; propanoate degradation. It participates in carbohydrate metabolism; tricarboxylic acid cycle; isocitrate from oxaloacetate: step 1/2. In terms of biological role, involved in the catabolism of short chain fatty acids (SCFA) via the tricarboxylic acid (TCA)(acetyl degradation route) and via the 2-methylcitrate cycle I (propionate degradation route). Catalyzes the Claisen condensation of propionyl-CoA and oxaloacetate (OAA) to yield 2-methylcitrate (2-MC) and CoA. Also catalyzes the condensation of oxaloacetate with acetyl-CoA. This is 2-methylcitrate synthase (gltA1) from Mycobacterium tuberculosis (strain ATCC 35801 / TMC 107 / Erdman).